Here is a 420-residue protein sequence, read N- to C-terminus: O-methyltransferase penK (420 aa).

Aspartate 285 provides a ligand contact to S-adenosyl-L-methionine. Histidine 325 functions as the Proton acceptor in the catalytic mechanism.

Belongs to the class I-like SAM-binding methyltransferase superfamily. Cation-independent O-methyltransferase family.

The protein operates within secondary metabolite biosynthesis. Its pathway is alkaloid biosynthesis. It participates in mycotoxin biosynthesis. In terms of biological role, O-methyltransferase; part of the gene cluster that mediates the biosynthesis of penigequinolones, potent insecticidal alkaloids that contain a highly modified 10-carbon prenyl group. The first stage is catalyzed by the nonribosomal peptide synthetase penN that condenses anthranilic acid and O-methyl-L-tyrosine to produce 4'-methoxycyclopeptin. 4'-methoxycyclopeptin is then converted to 4'-methoxydehydrocyclopeptin by the ketoglutarate-dependent dioxygenase penM through dehydrogenation to form a double bond between C-alpha and C-beta of the O-methyltyrosine side chain. PenM also converts its first product methoxydehydrocyclopeptin to 4'-methoxycyclopenin. The following conversion of 4'methoxycyclopenin into 4'-methoxyviridicatin is catalyzed by the cyclopenase penL. 4'-methoxyviridicatin is the precursor of quinolone natural products, and is further converted to quinolinone B. The prenyltransferase penI then catalyzes the canonical Friedel-Crafts alkylation of quinolinone B with dimethylallyl cation to yield dimethylallyl quinolone, which is subjected to FAD-dependent dehydrogenation by the FAD-linked oxidoreductase penH to yield conjugated aryl diene. The delta(3') double bond then serves as the site of the second alkylation with DMAPP catalyzed by the prenyltransferase penG to yield a carbenium ion intermediate, which can be attacked by H(2)O to yield a styrenyl quinolone containing a C3'-hydroxyprenyl chain, or undergo cyclization to yield yaequinolones J1 and J2. The conversion of the styrenyl quinolone into the tetrahydrofuran-containing yaequinolone C is performed by the FAD-dependent monooxygenase penE and involves epoxidation of the terminal C7'-C8' olefin, followed by epoxide ring opening initiated by the C3' hydroxyl group. The predicted cysteine hydrolase penJ acts as an epoxide hydrolase that enhances the rate of the 5-exo-tet cyclization step, increasing the yield of yaequinolone C. PenF catalyzes the cationic rearrangement of the epoxide formed by penE (before ring opening to produce yaequinolone C) into yaequinolone D. Finally, the short-chain dehydrogenase/reductase (SDR)-like reductase penD, catalyzes both the dehydration of yaequinolone D and the reduction of the resulting oxonium to yield penigequinolone. The polypeptide is O-methyltransferase penK (Penicillium thymicola).